The chain runs to 905 residues: Clumping factor B (905 aa).

Residues 1–44 (MKKRIDYLSNKQNKYSIRRFTVGTTSVIVGATILFGIGNHQAQA) form the signal peptide. The YSIRK-G/S signaling motif signature appears at 15–26 (YSIRRFTVGTTS). Composition is skewed to polar residues over residues 44 to 61 (ASEQ…NASA) and 68 to 101 (MIET…KPMS). A disordered region spans residues 44-191 (ASEQSNDTTQ…AQGTSKPSVR (148 aa)). The interval 45–542 (SEQSNDTTQS…GSADGDSAVN (498 aa)) is ligand binding A region. Low complexity predominate over residues 102–119 (TQTSNTTTTEPASTNETP). Residues 134-189 (QDQTVPQEANSQVDNKTTNDANSIATNSELKNPQTLDLPQSSPQTISNAQGTSKPS) show a composition bias toward polar residues. The MIDAS-like motif signature appears at 272–276 (DYSNS). A disordered region spans residues 530-877 (YGGGSADGDS…ETGDKSENTN (348 aa)). Over residues 545–555 (DPTPGPPVDPE) the composition is skewed to pro residues. A compositionally biased stretch (acidic residues) spans 556-829 (PSPDPEPEPS…SDSDSDSDSD (274 aa)). Polar residues predominate over residues 833-844 (RVTPPNNEQKAP). Residues 861–874 (HKTDALPETGDKSE) show a composition bias toward basic and acidic residues. An LPXTG sorting signal motif is present at residues 866–870 (LPETG). Thr869 carries the pentaglycyl murein peptidoglycan amidated threonine modification. Residues 870–905 (GDKSENTNATLFGAMMALLGSLLLFRKRKQDHKEKA) constitute a propeptide, removed by sortase.

Belongs to the serine-aspartate repeat-containing protein (SDr) family. Proteolytically cleaved by aureolysin (aur). This cleavage leads to the inactivation of ClfB.

It is found in the secreted. It localises to the cell wall. Cell surface-associated protein implicated in virulence by promoting bacterial attachment to both alpha- and beta-chains of human fibrinogen and inducing the formation of bacterial clumps. This is Clumping factor B (clfB) from Staphylococcus aureus (strain MSSA476).